The primary structure comprises 290 residues: Coiled-coil domain-containing protein 137 (290 aa).

Disordered stretches follow at residues 1–92, 98–117, 139–181, and 269–290; these read MARP…EAQV, LEKE…FKQR, LSKN…EARA, and RQEM…HACL. The span at 20 to 39 shows a compositional bias: low complexity; it reads SGQPQGRRQQQAQGQQRSAS. A compositionally biased stretch (basic and acidic residues) spans 56–79; it reads KNQDEQEIPFRLREIMRSRQEMKK. Residues 66 to 89 are a coiled coil; that stretch reads RLREIMRSRQEMKKTLSNKKRKKE. The segment covering 154-163 has biased composition (basic and acidic residues); the sequence is PKKEKSERKK. A coiled-coil region spans residues 155-192; that stretch reads KKEKSERKKAFQKRRLEKAQRKREARAVDRLEQELLKD. Basic residues predominate over residues 164-178; sequence AFQKRRLEKAQRKRE.

The protein resides in the chromosome. In Mus musculus (Mouse), this protein is Coiled-coil domain-containing protein 137 (Ccdc137).